A 656-amino-acid polypeptide reads, in one-letter code: DNA ligase (656 aa).

NAD(+)-binding positions include 32-36 (DAVYD) and 81-82 (SL). Lysine 112 functions as the N6-AMP-lysine intermediate in the catalytic mechanism. Residues arginine 133, glutamate 167, and lysine 306 each coordinate NAD(+). Zn(2+)-binding residues include cysteine 400, cysteine 403, cysteine 416, and cysteine 421. Residues 577–656 (KSSSVFNNKT…ELLKRLKELD (80 aa)) enclose the BRCT domain.

It belongs to the NAD-dependent DNA ligase family. LigA subfamily. Mg(2+) serves as cofactor. Requires Mn(2+) as cofactor.

It carries out the reaction NAD(+) + (deoxyribonucleotide)n-3'-hydroxyl + 5'-phospho-(deoxyribonucleotide)m = (deoxyribonucleotide)n+m + AMP + beta-nicotinamide D-nucleotide.. Its function is as follows. DNA ligase that catalyzes the formation of phosphodiester linkages between 5'-phosphoryl and 3'-hydroxyl groups in double-stranded DNA using NAD as a coenzyme and as the energy source for the reaction. It is essential for DNA replication and repair of damaged DNA. The polypeptide is DNA ligase (Helicobacter pylori (strain HPAG1)).